The chain runs to 583 residues: Cell division protein FtsZ (583 aa).

GTP contacts are provided by residues 24–28 (GGGGN), 111–113 (GTG), glutamate 142, arginine 146, and aspartate 190. 2 disordered regions span residues 391-425 (HQQP…VQQA) and 510-583 (TNSL…RQSN). Positions 412 to 425 (APAALRPAQPVQQA) are enriched in low complexity.

The protein belongs to the FtsZ family. In terms of assembly, homodimer. Polymerizes to form a dynamic ring structure in a strictly GTP-dependent manner. Interacts directly with several other division proteins.

It is found in the cytoplasm. In terms of biological role, essential cell division protein that forms a contractile ring structure (Z ring) at the future cell division site. The regulation of the ring assembly controls the timing and the location of cell division. One of the functions of the FtsZ ring is to recruit other cell division proteins to the septum to produce a new cell wall between the dividing cells. Binds GTP and shows GTPase activity. In Rhizobium radiobacter (Agrobacterium tumefaciens), this protein is Cell division protein FtsZ.